Here is an 86-residue protein sequence, read N- to C-terminus: Small ribosomal subunit protein bS16 (86 aa).

This sequence belongs to the bacterial ribosomal protein bS16 family.

The sequence is that of Small ribosomal subunit protein bS16 from Stenotrophomonas maltophilia (strain K279a).